The chain runs to 162 residues: tRNA (cytidine(34)-2'-O)-methyltransferase (162 aa).

S-adenosyl-L-methionine is bound by residues Leu-83, Gly-105, Ile-127, and Ser-135.

This sequence belongs to the class IV-like SAM-binding methyltransferase superfamily. RNA methyltransferase TrmH family. TrmL subfamily. As to quaternary structure, homodimer.

It localises to the cytoplasm. It catalyses the reaction cytidine(34) in tRNA + S-adenosyl-L-methionine = 2'-O-methylcytidine(34) in tRNA + S-adenosyl-L-homocysteine + H(+). The enzyme catalyses 5-carboxymethylaminomethyluridine(34) in tRNA(Leu) + S-adenosyl-L-methionine = 5-carboxymethylaminomethyl-2'-O-methyluridine(34) in tRNA(Leu) + S-adenosyl-L-homocysteine + H(+). Functionally, methylates the ribose at the nucleotide 34 wobble position in the two leucyl isoacceptors tRNA(Leu)(CmAA) and tRNA(Leu)(cmnm5UmAA). Catalyzes the methyl transfer from S-adenosyl-L-methionine to the 2'-OH of the wobble nucleotide. The protein is tRNA (cytidine(34)-2'-O)-methyltransferase of Photorhabdus asymbiotica subsp. asymbiotica (strain ATCC 43949 / 3105-77) (Xenorhabdus luminescens (strain 2)).